Here is a 157-residue protein sequence, read N- to C-terminus: 6,7-dimethyl-8-ribityllumazine synthase (157 aa).

5-amino-6-(D-ribitylamino)uracil contacts are provided by residues F22, 56–58, and 81–83; these read AFE and VLI. 86 to 87 is a binding site for (2S)-2-hydroxy-3-oxobutyl phosphate; it reads ET. H89 functions as the Proton donor in the catalytic mechanism. 5-amino-6-(D-ribitylamino)uracil is bound at residue F114. Residue R128 participates in (2S)-2-hydroxy-3-oxobutyl phosphate binding.

This sequence belongs to the DMRL synthase family.

The enzyme catalyses (2S)-2-hydroxy-3-oxobutyl phosphate + 5-amino-6-(D-ribitylamino)uracil = 6,7-dimethyl-8-(1-D-ribityl)lumazine + phosphate + 2 H2O + H(+). It participates in cofactor biosynthesis; riboflavin biosynthesis; riboflavin from 2-hydroxy-3-oxobutyl phosphate and 5-amino-6-(D-ribitylamino)uracil: step 1/2. Functionally, catalyzes the formation of 6,7-dimethyl-8-ribityllumazine by condensation of 5-amino-6-(D-ribitylamino)uracil with 3,4-dihydroxy-2-butanone 4-phosphate. This is the penultimate step in the biosynthesis of riboflavin. In Chlamydia trachomatis serovar L2 (strain ATCC VR-902B / DSM 19102 / 434/Bu), this protein is 6,7-dimethyl-8-ribityllumazine synthase.